Here is a 245-residue protein sequence, read N- to C-terminus: 1-(5-phosphoribosyl)-5-[(5-phosphoribosylamino)methylideneamino] imidazole-4-carboxamide isomerase (245 aa).

Asp-7 acts as the Proton acceptor in catalysis. The active-site Proton donor is the Asp-129.

This sequence belongs to the HisA/HisF family.

Its subcellular location is the cytoplasm. The catalysed reaction is 1-(5-phospho-beta-D-ribosyl)-5-[(5-phospho-beta-D-ribosylamino)methylideneamino]imidazole-4-carboxamide = 5-[(5-phospho-1-deoxy-D-ribulos-1-ylimino)methylamino]-1-(5-phospho-beta-D-ribosyl)imidazole-4-carboxamide. Its pathway is amino-acid biosynthesis; L-histidine biosynthesis; L-histidine from 5-phospho-alpha-D-ribose 1-diphosphate: step 4/9. The sequence is that of 1-(5-phosphoribosyl)-5-[(5-phosphoribosylamino)methylideneamino] imidazole-4-carboxamide isomerase from Klebsiella pneumoniae subsp. pneumoniae (strain ATCC 700721 / MGH 78578).